Consider the following 67-residue polypeptide: MPKMKTKSSAKKRFRVRPGGTVKRGQAFKRHILTKKTTKNKRHLRGIVNVHEGDMGSIAKMLPSAGL.

This sequence belongs to the bacterial ribosomal protein bL35 family.

The protein is Large ribosomal subunit protein bL35 of Acidovorax ebreus (strain TPSY) (Diaphorobacter sp. (strain TPSY)).